Consider the following 936-residue polypeptide: Calcium homeostasis endoplasmic reticulum protein (936 aa).

N-acetylmethionine is present on methionine 1. An SURP motif repeat occupies 15–57 (VIDKLAQFVARNGPEFEKMTMEKQKDNPKFSFLFGGEFYSYYK). Lysine 18 is modified (N6-acetyllysine). The disordered stretch occupies residues 77-102 (EPTSAMPPLPQPPLAPTASLTPAQGT). A compositionally biased stretch (pro residues) spans 81–91 (AMPPLPQPPLA). Positions 149-289 (ETQLDMSEFD…QLQSPALGLG (141 aa)) constitute a CID domain. Residues 328–646 (LAQQQQQQQQ…RQGPPHINHD (319 aa)) form a disordered region. A compositionally biased stretch (low complexity) spans 330–355 (QQQQQQQQQQQQQPQPQPQPQIQLPQ). Residues 363-383 (TPPPPAPPPASAPAPTIPPTT) are compositionally biased toward pro residues. Residues 395–405 (PGSSEYDTSAG) show a composition bias toward polar residues. Residues 488–500 (PWNNQPDPNWNNQ) show a composition bias toward low complexity. Residues 534 to 550 (PFPPHQQHPQFNQPPHP) are compositionally biased toward pro residues. Residues 551–560 (HNFNRFPPRF) show a composition bias toward low complexity. Residues 561 to 572 (MQDDFPPRHPFE) are compositionally biased toward basic and acidic residues. Basic residues predominate over residues 594-603 (PHHHPGHRMP). Tyrosine 723 carries the post-translational modification Phosphotyrosine. A disordered region spans residues 731-887 (RARRRKGQEK…DPIKGGDVRD (157 aa)). The span at 748–758 (SRSRSKSRGRS) shows a compositional bias: basic residues. Over residues 759-773 (SSRSSSRSSKSSRSS) the composition is skewed to low complexity. A compositionally biased stretch (basic residues) spans 774-824 (SRSHSRSRSRSSSRSRSRSRSRSRSSRSRSRSRSRSRSKSYSPGRRRRSRS). Phosphoserine occurs at positions 822, 824, and 826. Threonine 828 carries the post-translational modification Phosphothreonine. Position 837 is a phosphoserine (serine 837). A G-patch domain is found at 850–900 (EENKGHQMLVKMGWSGSGGLGAKEQGIQDPIKGGDVRDKWDQYKGVGVALD). Residue lysine 853 forms a Glycyl lysine isopeptide (Lys-Gly) (interchain with G-Cter in SUMO2) linkage. Phosphoserine occurs at positions 864 and 866. A Glycyl lysine isopeptide (Lys-Gly) (interchain with G-Cter in SUMO2) cross-link involves residue lysine 881. The residue at position 888 (lysine 888) is an N6-acetyllysine. Serine 913 carries the phosphoserine modification.

It is found in the cytoplasm. The protein resides in the perinuclear region. The protein localises to the endoplasmic reticulum. In terms of biological role, involved in calcium homeostasis, growth and proliferation. This chain is Calcium homeostasis endoplasmic reticulum protein, found in Mus musculus (Mouse).